The chain runs to 557 residues: Formate--tetrahydrofolate ligase (557 aa).

65–72 (TPAGEGKT) serves as a coordination point for ATP.

Belongs to the formate--tetrahydrofolate ligase family.

It carries out the reaction (6S)-5,6,7,8-tetrahydrofolate + formate + ATP = (6R)-10-formyltetrahydrofolate + ADP + phosphate. The protein operates within one-carbon metabolism; tetrahydrofolate interconversion. In Methylococcus capsulatus (strain ATCC 33009 / NCIMB 11132 / Bath), this protein is Formate--tetrahydrofolate ligase.